Consider the following 640-residue polypeptide: Threonine--tRNA ligase (640 aa).

Residues 1-61 (MPTITLPDGS…ENDASLQIIT (61 aa)) enclose the TGS domain. Positions 242 to 533 (DHRKIGKRLG…LIEHYEGAFP (292 aa)) are catalytic. Zn(2+) is bound by residues Cys333, His384, and His510.

This sequence belongs to the class-II aminoacyl-tRNA synthetase family. As to quaternary structure, homodimer. Requires Zn(2+) as cofactor.

It localises to the cytoplasm. The catalysed reaction is tRNA(Thr) + L-threonine + ATP = L-threonyl-tRNA(Thr) + AMP + diphosphate + H(+). In terms of biological role, catalyzes the attachment of threonine to tRNA(Thr) in a two-step reaction: L-threonine is first activated by ATP to form Thr-AMP and then transferred to the acceptor end of tRNA(Thr). Also edits incorrectly charged L-seryl-tRNA(Thr). In Pseudomonas syringae pv. tomato (strain ATCC BAA-871 / DC3000), this protein is Threonine--tRNA ligase.